We begin with the raw amino-acid sequence, 297 residues long: MEARIILLRIQIPWSANRQFSHPPLDFPRFIRASSSSTSQKPKTYEGPKPRKNLVADFISKNDDLVRSLPIYVGGASLLAVLFNRTVSGIAPVADASSSQSRADLLALGLAVTNLLTGLVWLSIRPKSITPVNPKGVECKVVESDLPASMVSELLWAWESLKVATCCKSLVIVYNGICLIQIGMVAESPEDKKTVIVKTDKLMQGSVYRGVMKSKAQSYLANLSLYPGRSELPFLPANTQAVILQPLGDKGIAVIGGNTIRGFTSSDQAWISSIGEKLDATLGRYFVDSDEISRVTV.

The transit peptide at 1–33 (MEARIILLRIQIPWSANRQFSHPPLDFPRFIRA) directs the protein to the chloroplast. Residues 34-70 (SSSSTSQKPKTYEGPKPRKNLVADFISKNDDLVRSLP) lie on the Stromal side of the membrane. The helical transmembrane segment at 71–91 (IYVGGASLLAVLFNRTVSGIA) threads the bilayer. The Lumenal portion of the chain corresponds to 92 to 103 (PVADASSSQSRA). Residues 104 to 124 (DLLALGLAVTNLLTGLVWLSI) traverse the membrane as a helical segment. The Stromal portion of the chain corresponds to 125–297 (RPKSITPVNP…DSDEISRVTV (173 aa)).

It localises to the plastid. The protein localises to the chloroplast thylakoid membrane. Its function is as follows. Required for the biogenesis and accumulation of native cytochrome b6 in the thylakoid membrane. Controls the conversion of apocytochrome b6 to holocytochrome b6. Required for covalent binding of the c-type heme to cytochrome b6. The chain is Protein COFACTOR ASSEMBLY OF COMPLEX C SUBUNIT B CCB4, chloroplastic from Arabidopsis thaliana (Mouse-ear cress).